Here is a 219-residue protein sequence, read N- to C-terminus: Ribosomal RNA small subunit methyltransferase I (219 aa).

This sequence belongs to the methyltransferase superfamily. RsmI family.

The protein resides in the cytoplasm. It catalyses the reaction cytidine(1402) in 16S rRNA + S-adenosyl-L-methionine = 2'-O-methylcytidine(1402) in 16S rRNA + S-adenosyl-L-homocysteine + H(+). Catalyzes the 2'-O-methylation of the ribose of cytidine 1402 (C1402) in 16S rRNA. The sequence is that of Ribosomal RNA small subunit methyltransferase I from Coprothermobacter proteolyticus (strain ATCC 35245 / DSM 5265 / OCM 4 / BT).